Reading from the N-terminus, the 964-residue chain is Insulin receptor substrate 1 (964 aa).

The 102-residue stretch at 8–109 folds into the PH domain; sequence GMALSGNLKK…WLDKLLVLQR (102 aa). Positions 122–236 constitute an IRS-type PTB domain; it reads YDQVWQVVIQ…SAMSAKTESN (115 aa). Positions 249 to 268 are disordered; that stretch reads LSHEPMRKRSSSANEASKPI. A phosphoserine mark is found at serine 286, serine 287, and serine 342. The residue at position 410 (tyrosine 410) is a Phosphotyrosine; by INSR. Positions 410–413 match the YXXM motif 1 motif; sequence YIPM. The tract at residues 527–560 is disordered; sequence ASNRSQSSIGKEGSSYGSSANRQKKSTSAPLLSL. The span at 528-560 shows a compositional bias: polar residues; the sequence is SNRSQSSIGKEGSSYGSSANRQKKSTSAPLLSL. Residue serine 554 is modified to Phosphoserine. A YXXM motif 2 motif is present at residues 640 to 643; the sequence is YLEM. Over residues 698–712 the composition is skewed to basic and acidic residues; that stretch reads EKWREQPSRSEEKKS. The segment at 698-735 is disordered; it reads EKWREQPSRSEEKKSNSPLNDNPFSLKPTNVESKSKSH. Polar residues predominate over residues 713–729; the sequence is NSPLNDNPFSLKPTNVE. The residue at position 907 (tyrosine 907) is a Phosphotyrosine; by INSR. Residues 921-964 form a disordered region; it reads AKYLKRGSRESPPVSACPEDGNTYARIDFDQSDSSSSSSNIFNT. Residues serine 928 and serine 931 each carry the phosphoserine modification. The residue at position 944 (tyrosine 944) is a Phosphotyrosine; by INSR. Residues 952-964 are compositionally biased toward low complexity; sequence SDSSSSSSNIFNT.

In terms of assembly, bindings to phosphatidylinositol 3-kinase and SHP2.

Its function is as follows. Activates phosphatidylinositol 3-kinase when bound to the regulatory p85 subunit. May mediate the control of various cellular processes by insulin-like peptides. When phosphorylated by the insulin receptor binds specifically to various cellular proteins containing SH2 domains. Involved in control of cell proliferation, cell size, and body and organ growth throughout development. Also has a role in a signaling pathway controlling the physiological response required to endure periods of low nutrient conditions. Insulin/insulin-like growth factor (IGF) signaling pathway has a role in regulating aging and is necessary in the ovary for vitellogenic maturation. The chain is Insulin receptor substrate 1 from Drosophila sechellia (Fruit fly).